The primary structure comprises 365 residues: tRNA/tmRNA (uracil-C(5))-methyltransferase (365 aa).

5 residues coordinate S-adenosyl-L-methionine: Q189, Y217, N222, E238, and D298. The active-site Nucleophile is C323. The Proton acceptor role is filled by E357.

The protein belongs to the class I-like SAM-binding methyltransferase superfamily. RNA M5U methyltransferase family. TrmA subfamily.

It carries out the reaction uridine(54) in tRNA + S-adenosyl-L-methionine = 5-methyluridine(54) in tRNA + S-adenosyl-L-homocysteine + H(+). It catalyses the reaction uridine(341) in tmRNA + S-adenosyl-L-methionine = 5-methyluridine(341) in tmRNA + S-adenosyl-L-homocysteine + H(+). Functionally, dual-specificity methyltransferase that catalyzes the formation of 5-methyluridine at position 54 (m5U54) in all tRNAs, and that of position 341 (m5U341) in tmRNA (transfer-mRNA). In Pseudoalteromonas atlantica (strain T6c / ATCC BAA-1087), this protein is tRNA/tmRNA (uracil-C(5))-methyltransferase.